Reading from the N-terminus, the 191-residue chain is Repressor Rok (191 aa).

A coiled-coil region spans residues 2 to 43 (FNEREALRLRLEQLNEAEVKVIREYQIERDKIYAKLRELDRN). The segment covering 75-96 (SYQPQSQQQSVQPQLQSISSLP) has biased composition (low complexity). Residues 75–116 (SYQPQSQQQSVQPQLQSISSLPAGIPDGTTRRRRGTARPGSK) form a disordered region. A DNA-binding region spans residues 95–191 (LPAGIPDGTT…EIESAESANE (97 aa)).

The protein localises to the cytoplasm. The protein resides in the nucleoid. In terms of biological role, repressor of comK, the master regulator of competence development. Overexpression seems to be lethal. Represses at least 20 genes that specify membrane-localized and secreted proteins, including some that encode products with antibiotic activity. Binds to many AT-rich sites in the chromosome, many of which are known or thought to derive from horizontal gene transfer; helps keep mobile element ICEBs1 quiescent in the genome. Binds to its own promoter and is thus probably autoregulatory. The polypeptide is Repressor Rok (Bacillus subtilis (strain 168)).